The following is a 192-amino-acid chain: Glycerol-3-phosphate acyltransferase (192 aa).

Helical transmembrane passes span 4-24 (MFWL…AILL), 54-74 (LAVL…VLAG), 80-100 (PSQQ…PLYF), 112-132 (AGVL…AWLL), and 154-174 (LLAW…LLIV).

The protein belongs to the PlsY family. In terms of assembly, probably interacts with PlsX.

It localises to the cell inner membrane. The enzyme catalyses an acyl phosphate + sn-glycerol 3-phosphate = a 1-acyl-sn-glycero-3-phosphate + phosphate. It functions in the pathway lipid metabolism; phospholipid metabolism. Its function is as follows. Catalyzes the transfer of an acyl group from acyl-phosphate (acyl-PO(4)) to glycerol-3-phosphate (G3P) to form lysophosphatidic acid (LPA). This enzyme utilizes acyl-phosphate as fatty acyl donor, but not acyl-CoA or acyl-ACP. The polypeptide is Glycerol-3-phosphate acyltransferase (Pseudomonas syringae pv. tomato (strain ATCC BAA-871 / DC3000)).